The sequence spans 185 residues: Auxin-responsive protein IAA34 (185 aa).

Positions L63 to L67 match the EAR-like (transcriptional repression) motif. Residues W92–D180 enclose the PB1 domain.

Belongs to the Aux/IAA family. Homodimers and heterodimers.

The protein resides in the nucleus. Its function is as follows. Aux/IAA proteins are short-lived transcriptional factors that function as repressors of early auxin response genes at low auxin concentrations. Repression is thought to result from the interaction with auxin response factors (ARFs), proteins that bind to the auxin-responsive promoter element (AuxRE). Formation of heterodimers with ARF proteins may alter their ability to modulate early auxin response genes expression. In Arabidopsis thaliana (Mouse-ear cress), this protein is Auxin-responsive protein IAA34 (IAA34).